Consider the following 805-residue polypeptide: Cell division cycle 5-related protein (805 aa).

2 consecutive HTH myb-type domains span residues 1–58 and 59–108; these read MPRI…DPSI and KKTE…DQAQ. 2 DNA-binding regions (H-T-H motif) span residues 31–54 and 82–104; these read WSRIASLLHRKSAKQCKARWYEWL and WRTIAPLIGRTAAQCLERYEYLL. The span at 108–127 shows a compositional bias: basic and acidic residues; the sequence is QAKEGDKDEGDDPRKLRPGE. Disordered regions lie at residues 108–143, 246–293, 409–442, and 530–556; these read QAKEGDKDEGDDPRKLRPGEIDPNPETKPARPDPID, HLEG…HVKK, LSTPYRTPGEGSGSTPRQGMTPRGAIGTPSQRSV, and LERRRRSQAVQRELPRPSNVNTSVLRP. The stretch at 142–193 forms a coiled coil; that stretch reads IDMDEDELEMLSEARARLANTQGKKAKRKAREKQLEEARRLAALQKRRELRA. Positions 246–274 are enriched in basic and acidic residues; that stretch reads HLEGKMRDEIEQQERKKDKERMKKKKESD. 2 coiled-coil regions span residues 511–542 and 678–804; these read EDAADIDERALALRAKQEELERRRRSQAVQRE and YTRA…SKLQ.

It belongs to the CEF1 family. As to quaternary structure, component of the precatalytic, catalytic and postcatalytic spliceosome complexes.

Its subcellular location is the nucleus. The protein resides in the cytoplasm. In terms of biological role, DNA-binding protein involved in cell cycle control. May act as a transcription activator. Plays a role in pre-mRNA splicing as core component of precatalytic, catalytic and postcatalytic spliceosomal complexes. May also play a role in the response to DNA damage (DDR). The polypeptide is Cell division cycle 5-related protein (cdc5l) (Nematostella vectensis (Starlet sea anemone)).